The chain runs to 473 residues: RUN domain-containing protein 3B (473 aa).

Residues 1 to 24 (MASRSLGGLSGIRGGGGGGGKKSL) form a disordered region. Residues 8-21 (GLSGIRGGGGGGGK) are compositionally biased toward gly residues. R13 bears the Omega-N-methylarginine mark. Positions 57-206 (DDSSPEFNNF…IDFSFCLKGE (150 aa)) constitute an RUN domain. Residues S232 and S233 each carry the phosphoserine modification. Residues 317-342 (AHKLEKEQLEYIIVELQDQLTVLKNN) adopt a coiled-coil conformation. Polar residues predominate over residues 399-422 (SLSQTSLDPGQSQEGDGKQDTLNV). The interval 399–428 (SLSQTSLDPGQSQEGDGKQDTLNVMSEGKE) is disordered.

Belongs to the RUNDC3 family. As to quaternary structure, interacts with RAP2A. As to expression, isoform 2 is expressed at high levels in brain, thymus, ovary, testis, leukocyte, liver, small intestine and prostate. Isoform 1 is expressed in the brain, testis and adrenal gland. It is activated in tumorigenic breast cancer cell lines and in the primary tumor of breast cancer patients. Activation also correlates with metastatic lymph node invasion and can be detected in metastatic epithelial cells from the lymph nodes and in the bone marrow of patients.

This chain is RUN domain-containing protein 3B (RUNDC3B), found in Homo sapiens (Human).